We begin with the raw amino-acid sequence, 223 residues long: 2-C-methyl-D-erythritol 4-phosphate cytidylyltransferase (223 aa).

It belongs to the IspD/TarI cytidylyltransferase family. IspD subfamily.

It carries out the reaction 2-C-methyl-D-erythritol 4-phosphate + CTP + H(+) = 4-CDP-2-C-methyl-D-erythritol + diphosphate. Its pathway is isoprenoid biosynthesis; isopentenyl diphosphate biosynthesis via DXP pathway; isopentenyl diphosphate from 1-deoxy-D-xylulose 5-phosphate: step 2/6. Its function is as follows. Catalyzes the formation of 4-diphosphocytidyl-2-C-methyl-D-erythritol from CTP and 2-C-methyl-D-erythritol 4-phosphate (MEP). The polypeptide is 2-C-methyl-D-erythritol 4-phosphate cytidylyltransferase (Synechococcus sp. (strain WH7803)).